The sequence spans 259 residues: MNITDIRTKSPLVLTYANFVTPQFVANVVNVVGASPLMSRELAEFKELAGIANAVIINTGTLQKVEINDIIKLSQEAYQLGKPVVLDPVAVSVPFRSKAITQFLASGHVDVIRGNAAEIAWFADIDFASQGIDATGKGDVIEIAQRAAKKTGAVIALSGACDVVSDGQYTQTLDINVEQLSSIVGTGDALSSLIGAFIADGLKVPNVMNAMATFKLAGQKAATKTNQPGSFTNQLLDELFVIDNIDVQNFVKESVLNHG.

Methionine 38 provides a ligand contact to substrate. Residues arginine 113 and serine 158 each coordinate ATP. Position 185 (glycine 185) interacts with substrate.

It belongs to the Thz kinase family. It depends on Mg(2+) as a cofactor.

It carries out the reaction 5-(2-hydroxyethyl)-4-methylthiazole + ATP = 4-methyl-5-(2-phosphooxyethyl)-thiazole + ADP + H(+). Its pathway is cofactor biosynthesis; thiamine diphosphate biosynthesis; 4-methyl-5-(2-phosphoethyl)-thiazole from 5-(2-hydroxyethyl)-4-methylthiazole: step 1/1. Catalyzes the phosphorylation of the hydroxyl group of 4-methyl-5-beta-hydroxyethylthiazole (THZ). The polypeptide is Hydroxyethylthiazole kinase 1 (Leuconostoc mesenteroides subsp. mesenteroides (strain ATCC 8293 / DSM 20343 / BCRC 11652 / CCM 1803 / JCM 6124 / NCDO 523 / NBRC 100496 / NCIMB 8023 / NCTC 12954 / NRRL B-1118 / 37Y)).